Consider the following 537-residue polypeptide: Putative cysteine ligase BshC (537 aa).

The stretch at 415–439 (EKASNNFINEVEEMKIQQQELYNNL) forms a coiled coil.

This sequence belongs to the BshC family.

Involved in bacillithiol (BSH) biosynthesis. May catalyze the last step of the pathway, the addition of cysteine to glucosamine malate (GlcN-Mal) to generate BSH. In Staphylococcus epidermidis (strain ATCC 12228 / FDA PCI 1200), this protein is Putative cysteine ligase BshC.